We begin with the raw amino-acid sequence, 185 residues long: Protein GrpE (185 aa).

The interval 1 to 40 (MSEEKKDEILEQETVETKEEIKTEEAEQKTESLEEKVARL) is disordered.

Belongs to the GrpE family. In terms of assembly, homodimer.

It is found in the cytoplasm. Functionally, participates actively in the response to hyperosmotic and heat shock by preventing the aggregation of stress-denatured proteins, in association with DnaK and GrpE. It is the nucleotide exchange factor for DnaK and may function as a thermosensor. Unfolded proteins bind initially to DnaJ; upon interaction with the DnaJ-bound protein, DnaK hydrolyzes its bound ATP, resulting in the formation of a stable complex. GrpE releases ADP from DnaK; ATP binding to DnaK triggers the release of the substrate protein, thus completing the reaction cycle. Several rounds of ATP-dependent interactions between DnaJ, DnaK and GrpE are required for fully efficient folding. The protein is Protein GrpE of Aliarcobacter butzleri (strain RM4018) (Arcobacter butzleri).